The following is a 265-amino-acid chain: Shikimate dehydrogenase (NADP(+)) (265 aa).

Shikimate is bound by residues 15-17 (SLS) and Thr-62. Residue Lys-66 is the Proton acceptor of the active site. Residues Asn-87 and Asp-102 each coordinate shikimate. Residues 125–129 (GAGGA), 149–154 (NRTLEK), and Leu-209 each bind NADP(+). Tyr-211 serves as a coordination point for shikimate. Gly-233 is an NADP(+) binding site.

Belongs to the shikimate dehydrogenase family. In terms of assembly, homodimer.

The catalysed reaction is shikimate + NADP(+) = 3-dehydroshikimate + NADPH + H(+). The protein operates within metabolic intermediate biosynthesis; chorismate biosynthesis; chorismate from D-erythrose 4-phosphate and phosphoenolpyruvate: step 4/7. In terms of biological role, involved in the biosynthesis of the chorismate, which leads to the biosynthesis of aromatic amino acids. Catalyzes the reversible NADPH linked reduction of 3-dehydroshikimate (DHSA) to yield shikimate (SA). This Legionella pneumophila (strain Corby) protein is Shikimate dehydrogenase (NADP(+)).